The chain runs to 438 residues: tRNA-dihydrouridine(16/17) synthase [NAD(P)(+)]-like (438 aa).

Residues Pro23–Val25 and Gln79 each bind FMN. Catalysis depends on Cys108, which acts as the Proton donor. Residues Lys147, His175, Asn208–Asn210, and Ala232–Glu233 contribute to the FMN site. A disordered region spans residues Gly343–Asp387. Positions Asn373–His383 are enriched in basic residues.

Belongs to the Dus family. Dus1 subfamily. FMN is required as a cofactor.

Its subcellular location is the cytoplasm. The protein localises to the nucleus. The enzyme catalyses 5,6-dihydrouridine(16) in tRNA + NADP(+) = uridine(16) in tRNA + NADPH + H(+). The catalysed reaction is 5,6-dihydrouridine(16) in tRNA + NAD(+) = uridine(16) in tRNA + NADH + H(+). It carries out the reaction 5,6-dihydrouridine(17) in tRNA + NAD(+) = uridine(17) in tRNA + NADH + H(+). It catalyses the reaction 5,6-dihydrouridine(17) in tRNA + NADP(+) = uridine(17) in tRNA + NADPH + H(+). Its function is as follows. Catalyzes the synthesis of dihydrouridine, a modified base found in the D-loop of most tRNAs. Specifically modifies U16 and U17 in cytoplasmic tRNAs. Affects the level of some mature tRNA and thereby the total cellular translation. The polypeptide is tRNA-dihydrouridine(16/17) synthase [NAD(P)(+)]-like (Dus1l) (Rattus norvegicus (Rat)).